A 510-amino-acid chain; its full sequence is Internal alternative NAD(P)H-ubiquinone oxidoreductase A1, mitochondrial (510 aa).

The transit peptide at 1–48 directs the protein to the mitochondrion; it reads MLWIKNLARISQTTSSSVGNVFRNPESYTLSSRFCTALQKQQVTDTVQ. 75–105 is a binding site for FAD; that stretch reads RVLVLGSGWAGCRVLKGIDTSIYDVVCVSPR. NAD(+) is bound at residue 242 to 278; sequence LHCVVVGGGPTGVEFSGELSDFIMKDVRQRYSHVKDD. The Microbody targeting signal signature appears at 501-510; the sequence is FVFGRDISRI.

It belongs to the NADH dehydrogenase family. It depends on FAD as a cofactor. In terms of tissue distribution, expressed in seedlings, cotyledons, young leaves, stems and flowers and, to a lower extent, in roots and buds.

Its subcellular location is the mitochondrion inner membrane. The protein localises to the peroxisome. The catalysed reaction is a quinone + NADH + H(+) = a quinol + NAD(+). The enzyme catalyses a ubiquinone + NADH + H(+) = a ubiquinol + NAD(+). Functionally, alternative NADH-ubiquinone oxidoreductase which catalyzes the oxidation of mitochondrial NADH does not translocate protons across the inner mitochondrial membrane. The polypeptide is Internal alternative NAD(P)H-ubiquinone oxidoreductase A1, mitochondrial (NDA1) (Arabidopsis thaliana (Mouse-ear cress)).